Consider the following 76-residue polypeptide: uncharacterized protein (76 aa).

A helical membrane pass occupies residues 53–70 (STKLHIIWFCIFAIFIAV).

The protein localises to the membrane. This is an uncharacterized protein from Haemophilus influenzae (strain ATCC 51907 / DSM 11121 / KW20 / Rd).